The primary structure comprises 544 residues: Chaperonin GroEL 1 (544 aa).

ATP contacts are provided by residues Thr-29–Pro-32, Asp-86–Thr-90, Gly-413, Asn-479–Ala-481, and Asp-495.

Belongs to the chaperonin (HSP60) family. In terms of assembly, forms a cylinder of 14 subunits composed of two heptameric rings stacked back-to-back. Interacts with the co-chaperonin GroES.

It localises to the cytoplasm. It catalyses the reaction ATP + H2O + a folded polypeptide = ADP + phosphate + an unfolded polypeptide.. Functionally, together with its co-chaperonin GroES, plays an essential role in assisting protein folding. The GroEL-GroES system forms a nano-cage that allows encapsulation of the non-native substrate proteins and provides a physical environment optimized to promote and accelerate protein folding. The chain is Chaperonin GroEL 1 from Trichormus variabilis (strain ATCC 29413 / PCC 7937) (Anabaena variabilis).